The primary structure comprises 264 residues: tRNA pseudouridine synthase A (264 aa).

The Nucleophile role is filled by D51. Y109 is a substrate binding site.

It belongs to the tRNA pseudouridine synthase TruA family. As to quaternary structure, homodimer.

It carries out the reaction uridine(38/39/40) in tRNA = pseudouridine(38/39/40) in tRNA. Its function is as follows. Formation of pseudouridine at positions 38, 39 and 40 in the anticodon stem and loop of transfer RNAs. The chain is tRNA pseudouridine synthase A from Polaromonas sp. (strain JS666 / ATCC BAA-500).